The chain runs to 227 residues: Cytochrome c oxidase subunit 2 (227 aa).

Over Met-1–Ser-14 the chain is Mitochondrial intermembrane. Residues Pro-15 to Met-45 form a helical membrane-spanning segment. Topologically, residues Leu-46–Gln-59 are mitochondrial matrix. A helical transmembrane segment spans residues Glu-60–Met-87. Residues Asp-88–Ile-227 are Mitochondrial intermembrane-facing. Cu cation-binding residues include His-161, Cys-196, Glu-198, Cys-200, His-204, and Met-207. Glu-198 contacts Mg(2+). A Phosphotyrosine modification is found at Tyr-218.

Belongs to the cytochrome c oxidase subunit 2 family. In terms of assembly, component of the cytochrome c oxidase (complex IV, CIV), a multisubunit enzyme composed of 14 subunits. The complex is composed of a catalytic core of 3 subunits MT-CO1, MT-CO2 and MT-CO3, encoded in the mitochondrial DNA, and 11 supernumerary subunits COX4I, COX5A, COX5B, COX6A, COX6B, COX6C, COX7A, COX7B, COX7C, COX8 and NDUFA4, which are encoded in the nuclear genome. The complex exists as a monomer or a dimer and forms supercomplexes (SCs) in the inner mitochondrial membrane with NADH-ubiquinone oxidoreductase (complex I, CI) and ubiquinol-cytochrome c oxidoreductase (cytochrome b-c1 complex, complex III, CIII), resulting in different assemblies (supercomplex SCI(1)III(2)IV(1) and megacomplex MCI(2)III(2)IV(2)). Found in a complex with TMEM177, COA6, COX18, COX20, SCO1 and SCO2. Interacts with TMEM177 in a COX20-dependent manner. Interacts with COX20. Interacts with COX16. Cu cation is required as a cofactor.

Its subcellular location is the mitochondrion inner membrane. It catalyses the reaction 4 Fe(II)-[cytochrome c] + O2 + 8 H(+)(in) = 4 Fe(III)-[cytochrome c] + 2 H2O + 4 H(+)(out). Functionally, component of the cytochrome c oxidase, the last enzyme in the mitochondrial electron transport chain which drives oxidative phosphorylation. The respiratory chain contains 3 multisubunit complexes succinate dehydrogenase (complex II, CII), ubiquinol-cytochrome c oxidoreductase (cytochrome b-c1 complex, complex III, CIII) and cytochrome c oxidase (complex IV, CIV), that cooperate to transfer electrons derived from NADH and succinate to molecular oxygen, creating an electrochemical gradient over the inner membrane that drives transmembrane transport and the ATP synthase. Cytochrome c oxidase is the component of the respiratory chain that catalyzes the reduction of oxygen to water. Electrons originating from reduced cytochrome c in the intermembrane space (IMS) are transferred via the dinuclear copper A center (CU(A)) of subunit 2 and heme A of subunit 1 to the active site in subunit 1, a binuclear center (BNC) formed by heme A3 and copper B (CU(B)). The BNC reduces molecular oxygen to 2 water molecules using 4 electrons from cytochrome c in the IMS and 4 protons from the mitochondrial matrix. This Lemniscomys barbarus (Barbary striped grass mouse) protein is Cytochrome c oxidase subunit 2 (MT-CO2).